A 238-amino-acid polypeptide reads, in one-letter code: Large ribosomal subunit protein uL3 (238 aa).

Glutamine 157 carries the post-translational modification N5-methylglutamine.

The protein belongs to the universal ribosomal protein uL3 family. In terms of assembly, part of the 50S ribosomal subunit. Forms a cluster with proteins L14 and L19. Post-translationally, methylated by PrmB.

Its function is as follows. One of the primary rRNA binding proteins, it binds directly near the 3'-end of the 23S rRNA, where it nucleates assembly of the 50S subunit. The protein is Large ribosomal subunit protein uL3 of Ruthia magnifica subsp. Calyptogena magnifica.